A 317-amino-acid polypeptide reads, in one-letter code: L-lactate dehydrogenase (317 aa).

Residues Val17, Asp38, Lys43, Tyr69, and 83–84 (GA) contribute to the NAD(+) site. Gln86 and Arg92 together coordinate substrate. Residues Ser105, 122–124 (ATN), and Ser147 contribute to the NAD(+) site. Residue 124-127 (NPVD) participates in substrate binding. A substrate-binding site is contributed by 152-155 (DTAR). Positions 157 and 172 each coordinate beta-D-fructose 1,6-bisphosphate. Residue His179 is the Proton acceptor of the active site. Tyr224 carries the phosphotyrosine modification. Thr233 is a binding site for substrate.

This sequence belongs to the LDH/MDH superfamily. LDH family. Homotetramer.

The protein resides in the cytoplasm. The enzyme catalyses (S)-lactate + NAD(+) = pyruvate + NADH + H(+). Its pathway is fermentation; pyruvate fermentation to lactate; (S)-lactate from pyruvate: step 1/1. With respect to regulation, allosterically activated by fructose 1,6-bisphosphate (FBP). Catalyzes the conversion of lactate to pyruvate. The protein is L-lactate dehydrogenase of Geobacillus kaustophilus (strain HTA426).